Consider the following 24-residue polypeptide: Unknown protein NF004 from 2D-PAGE (24 aa).

This is Unknown protein NF004 from 2D-PAGE from Naegleria fowleri (Brain eating amoeba).